A 257-amino-acid polypeptide reads, in one-letter code: Non-homologous end joining protein Ku (257 aa).

Residues T9–E184 enclose the Ku domain.

The protein belongs to the prokaryotic Ku family. As to quaternary structure, homodimer. Interacts with LigD.

In terms of biological role, with LigD forms a non-homologous end joining (NHEJ) DNA repair enzyme, which repairs dsDNA breaks with reduced fidelity. Binds linear dsDNA with 5'- and 3'- overhangs but not closed circular dsDNA nor ssDNA. Recruits and stimulates the ligase activity of LigD. This is Non-homologous end joining protein Ku from Lachnoclostridium phytofermentans (strain ATCC 700394 / DSM 18823 / ISDg) (Clostridium phytofermentans).